The following is a 152-amino-acid chain: UPF0179 protein HQ_3004A (152 aa).

The protein belongs to the UPF0179 family.

This is UPF0179 protein HQ_3004A from Haloquadratum walsbyi (strain DSM 16790 / HBSQ001).